Reading from the N-terminus, the 872-residue chain is Alanine--tRNA ligase (872 aa).

4 residues coordinate Zn(2+): H567, H571, C669, and H673.

It belongs to the class-II aminoacyl-tRNA synthetase family. Requires Zn(2+) as cofactor.

The protein localises to the cytoplasm. It carries out the reaction tRNA(Ala) + L-alanine + ATP = L-alanyl-tRNA(Ala) + AMP + diphosphate. In terms of biological role, catalyzes the attachment of alanine to tRNA(Ala) in a two-step reaction: alanine is first activated by ATP to form Ala-AMP and then transferred to the acceptor end of tRNA(Ala). Also edits incorrectly charged Ser-tRNA(Ala) and Gly-tRNA(Ala) via its editing domain. This chain is Alanine--tRNA ligase, found in Streptococcus gordonii (strain Challis / ATCC 35105 / BCRC 15272 / CH1 / DL1 / V288).